A 429-amino-acid chain; its full sequence is Adenylosuccinate synthetase (429 aa).

GTP contacts are provided by residues 12-18 (GDEGKGK) and 40-42 (GHT). Catalysis depends on aspartate 13, which acts as the Proton acceptor. Residues aspartate 13 and glycine 40 each coordinate Mg(2+). Residues 13–16 (DEGK), 38–41 (NAGH), threonine 130, arginine 144, glutamine 225, threonine 240, and arginine 304 contribute to the IMP site. Histidine 41 serves as the catalytic Proton donor. 300 to 306 (ATTGRPR) serves as a coordination point for substrate. Residues arginine 306, 332–334 (KLD), and 414–416 (SVG) contribute to the GTP site.

This sequence belongs to the adenylosuccinate synthetase family. Homodimer. Mg(2+) is required as a cofactor.

The protein localises to the cytoplasm. It catalyses the reaction IMP + L-aspartate + GTP = N(6)-(1,2-dicarboxyethyl)-AMP + GDP + phosphate + 2 H(+). Its pathway is purine metabolism; AMP biosynthesis via de novo pathway; AMP from IMP: step 1/2. In terms of biological role, plays an important role in the de novo pathway of purine nucleotide biosynthesis. Catalyzes the first committed step in the biosynthesis of AMP from IMP. The chain is Adenylosuccinate synthetase from Syntrophobacter fumaroxidans (strain DSM 10017 / MPOB).